A 333-amino-acid polypeptide reads, in one-letter code: Glyceraldehyde-3-phosphate dehydrogenase (333 aa).

Residues 11–12 (RI), Asp-35, and Thr-121 contribute to the NAD(+) site. Residues 151 to 153 (SCT) and Thr-182 each bind D-glyceraldehyde 3-phosphate. Cys-152 functions as the Nucleophile in the catalytic mechanism. Asn-183 contacts NAD(+). Residues Arg-197, 210–211 (TG), and Arg-233 each bind D-glyceraldehyde 3-phosphate. Asn-315 serves as a coordination point for NAD(+).

It belongs to the glyceraldehyde-3-phosphate dehydrogenase family. In terms of assembly, homotetramer.

It is found in the cytoplasm. The enzyme catalyses D-glyceraldehyde 3-phosphate + phosphate + NAD(+) = (2R)-3-phospho-glyceroyl phosphate + NADH + H(+). The protein operates within carbohydrate degradation; glycolysis; pyruvate from D-glyceraldehyde 3-phosphate: step 1/5. In terms of biological role, catalyzes the oxidative phosphorylation of glyceraldehyde 3-phosphate (G3P) to 1,3-bisphosphoglycerate (BPG) using the cofactor NAD. The first reaction step involves the formation of a hemiacetal intermediate between G3P and a cysteine residue, and this hemiacetal intermediate is then oxidized to a thioester, with concomitant reduction of NAD to NADH. The reduced NADH is then exchanged with the second NAD, and the thioester is attacked by a nucleophilic inorganic phosphate to produce BPG. This Thermotoga maritima (strain ATCC 43589 / DSM 3109 / JCM 10099 / NBRC 100826 / MSB8) protein is Glyceraldehyde-3-phosphate dehydrogenase (gap).